The following is a 421-amino-acid chain: Gamma-glutamyl phosphate reductase (421 aa).

Belongs to the gamma-glutamyl phosphate reductase family.

Its subcellular location is the cytoplasm. The enzyme catalyses L-glutamate 5-semialdehyde + phosphate + NADP(+) = L-glutamyl 5-phosphate + NADPH + H(+). It participates in amino-acid biosynthesis; L-proline biosynthesis; L-glutamate 5-semialdehyde from L-glutamate: step 2/2. Catalyzes the NADPH-dependent reduction of L-glutamate 5-phosphate into L-glutamate 5-semialdehyde and phosphate. The product spontaneously undergoes cyclization to form 1-pyrroline-5-carboxylate. The polypeptide is Gamma-glutamyl phosphate reductase (Acinetobacter baumannii (strain AYE)).